We begin with the raw amino-acid sequence, 278 residues long: Small ribosomal subunit protein uS3 (278 aa).

A KH type-2 domain is found at 39-107 (VRDFLKKRLA…PVHVNIEEVR (69 aa)). The segment at 217-278 (VENENEARRG…DAAAVEKEVS (62 aa)) is disordered. The segment covering 230-239 (PRNDAGDNRG) has biased composition (basic and acidic residues).

It belongs to the universal ribosomal protein uS3 family. In terms of assembly, part of the 30S ribosomal subunit. Forms a tight complex with proteins S10 and S14.

Binds the lower part of the 30S subunit head. Binds mRNA in the 70S ribosome, positioning it for translation. The protein is Small ribosomal subunit protein uS3 of Aromatoleum aromaticum (strain DSM 19018 / LMG 30748 / EbN1) (Azoarcus sp. (strain EbN1)).